A 41-amino-acid chain; its full sequence is Cytochrome b559 subunit beta (41 aa).

The chain crosses the membrane as a helical span at residues 16–32 (WLAVHALAVPTVFFLGA). His-20 lines the heme pocket.

Belongs to the PsbE/PsbF family. Heterodimer of an alpha subunit and a beta subunit. PSII is composed of 1 copy each of membrane proteins PsbA, PsbB, PsbC, PsbD, PsbE, PsbF, PsbH, PsbI, PsbJ, PsbK, PsbL, PsbM, PsbT, PsbX, PsbY, PsbZ, Psb30/Ycf12, at least 3 peripheral proteins of the oxygen-evolving complex and a large number of cofactors. It forms dimeric complexes. Heme b serves as cofactor.

It localises to the plastid. It is found in the chloroplast thylakoid membrane. Its function is as follows. This b-type cytochrome is tightly associated with the reaction center of photosystem II (PSII). PSII is a light-driven water:plastoquinone oxidoreductase that uses light energy to abstract electrons from H(2)O, generating O(2) and a proton gradient subsequently used for ATP formation. It consists of a core antenna complex that captures photons, and an electron transfer chain that converts photonic excitation into a charge separation. In Chlorella vulgaris (Green alga), this protein is Cytochrome b559 subunit beta.